Here is a 598-residue protein sequence, read N- to C-terminus: Elongation factor 4 (598 aa).

The region spanning 2–184 (DHIRNFSIIA…AIVKRVPPPR (183 aa)) is the tr-type G domain. Residues 14-19 (DHGKST) and 131-134 (NKID) contribute to the GTP site.

Belongs to the TRAFAC class translation factor GTPase superfamily. Classic translation factor GTPase family. LepA subfamily.

Its subcellular location is the cell inner membrane. The enzyme catalyses GTP + H2O = GDP + phosphate + H(+). In terms of biological role, required for accurate and efficient protein synthesis under certain stress conditions. May act as a fidelity factor of the translation reaction, by catalyzing a one-codon backward translocation of tRNAs on improperly translocated ribosomes. Back-translocation proceeds from a post-translocation (POST) complex to a pre-translocation (PRE) complex, thus giving elongation factor G a second chance to translocate the tRNAs correctly. Binds to ribosomes in a GTP-dependent manner. The sequence is that of Elongation factor 4 from Syntrophus aciditrophicus (strain SB).